The chain runs to 512 residues: MIKDMIDSIEQFAQTQADFPVYDCLGERRTYGQLKRDSDSIAAFIDSLALLAKSPVLVFGAQTYDMLATFVALTKSGHAYIPVDVHSAPERILAIIEIAKPSLIIAIEEFPLTIEGISLVSLSEIESAKLAEMPYERTHSVKGDDNYYIIFTSGTTGQPKGVQISHDNLLSFTNWMIEDAAFDVPKQPQMLAQPPYSFDLSVMYWAPTLALGGTLFALPKELVADFKQLFTTIAQLPVGIWTSTPSFADMAMLSDDFCQAKMPALTHFYFDGEELTVSTARKLFERFPSAKIINAYGPTEATVALSAIEITREMVDNYTRLPIGYPKPDSPTYIIDEDGKELASGEQGEIIVTGPAVSKGYLNNPEKTAEAFFTFKGQPAYHTGDIGSLTEDNILLYGGRLDFQIKYAGYRIELEDVSQQLNQSPMVASAVAVPRYNKEHKVQNLLAYIVVKDGVKERFDRELELTKAIKASVKDHMMSYMMPSKFLYRDSLPLTPNGKIDIKTLINEVNNR.

152 to 153 (TS) is a binding site for ATP. Aspartate 199 lines the D-alanine pocket. 294–299 (NAYGPT) provides a ligand contact to ATP. Residue valine 303 participates in D-alanine binding. ATP is bound by residues aspartate 385, 397–400 (YGGR), and lysine 499. Residue lysine 499 participates in D-alanine binding.

It belongs to the ATP-dependent AMP-binding enzyme family. DltA subfamily.

The protein localises to the cytoplasm. It catalyses the reaction holo-[D-alanyl-carrier protein] + D-alanine + ATP = D-alanyl-[D-alanyl-carrier protein] + AMP + diphosphate. It participates in cell wall biogenesis; lipoteichoic acid biosynthesis. Functionally, catalyzes the first step in the D-alanylation of lipoteichoic acid (LTA), the activation of D-alanine and its transfer onto the D-alanyl carrier protein (Dcp) DltC. In an ATP-dependent two-step reaction, forms a high energy D-alanyl-AMP intermediate, followed by transfer of the D-alanyl residue as a thiol ester to the phosphopantheinyl prosthetic group of the Dcp. D-alanylation of LTA plays an important role in modulating the properties of the cell wall in Gram-positive bacteria, influencing the net charge of the cell wall. In Streptococcus pyogenes serotype M18 (strain MGAS8232), this protein is D-alanine--D-alanyl carrier protein ligase.